Here is a 394-residue protein sequence, read N- to C-terminus: 3-phenylpropionate/cinnamic acid dioxygenase ferredoxin--NAD(+) reductase component (394 aa).

Residue threonine 5–lysine 36 participates in FAD binding. NAD(+) is bound at residue arginine 146–glutamate 174.

This sequence belongs to the bacterial ring-hydroxylating dioxygenase ferredoxin reductase family. As to quaternary structure, this dioxygenase system consists of four proteins: the two subunits of the hydroxylase component (HcaE and HcaF), a ferredoxin (HcaC) and a ferredoxin reductase (HcaD). FAD serves as cofactor.

The enzyme catalyses 2 reduced [2Fe-2S]-[ferredoxin] + NAD(+) + H(+) = 2 oxidized [2Fe-2S]-[ferredoxin] + NADH. Its pathway is aromatic compound metabolism; 3-phenylpropanoate degradation. In terms of biological role, part of the multicomponent 3-phenylpropionate dioxygenase, that converts 3-phenylpropionic acid (PP) and cinnamic acid (CI) into 3-phenylpropionate-dihydrodiol (PP-dihydrodiol) and cinnamic acid-dihydrodiol (CI-dihydrodiol), respectively. The polypeptide is 3-phenylpropionate/cinnamic acid dioxygenase ferredoxin--NAD(+) reductase component (Photorhabdus laumondii subsp. laumondii (strain DSM 15139 / CIP 105565 / TT01) (Photorhabdus luminescens subsp. laumondii)).